The primary structure comprises 149 residues: Probable ubiquitin-conjugating enzyme E2 12 (149 aa).

Basic and acidic residues predominate over residues 1 to 15 (MASKRISRELRDMQR). Positions 1–22 (MASKRISRELRDMQRHPPANCS) are disordered. Positions 1-148 (MASKRISREL…AQKWTQKYAM (148 aa)) constitute a UBC core domain. Residue C86 is the Glycyl thioester intermediate of the active site.

Belongs to the ubiquitin-conjugating enzyme family. In terms of tissue distribution, ubiquitously expressed at very low levels.

The catalysed reaction is S-ubiquitinyl-[E1 ubiquitin-activating enzyme]-L-cysteine + [E2 ubiquitin-conjugating enzyme]-L-cysteine = [E1 ubiquitin-activating enzyme]-L-cysteine + S-ubiquitinyl-[E2 ubiquitin-conjugating enzyme]-L-cysteine.. The protein operates within protein modification; protein ubiquitination. Accepts the ubiquitin from the E1 complex and catalyzes its covalent attachment to other proteins. The protein is Probable ubiquitin-conjugating enzyme E2 12 (UBC12) of Arabidopsis thaliana (Mouse-ear cress).